A 258-amino-acid chain; its full sequence is Deoxyribose-phosphate aldolase (258 aa).

Asp-102 functions as the Proton donor/acceptor in the catalytic mechanism. The active-site Schiff-base intermediate with acetaldehyde is Lys-165. The Proton donor/acceptor role is filled by Lys-199.

This sequence belongs to the DeoC/FbaB aldolase family. DeoC type 2 subfamily.

It localises to the cytoplasm. It carries out the reaction 2-deoxy-D-ribose 5-phosphate = D-glyceraldehyde 3-phosphate + acetaldehyde. The protein operates within carbohydrate degradation; 2-deoxy-D-ribose 1-phosphate degradation; D-glyceraldehyde 3-phosphate and acetaldehyde from 2-deoxy-alpha-D-ribose 1-phosphate: step 2/2. Catalyzes a reversible aldol reaction between acetaldehyde and D-glyceraldehyde 3-phosphate to generate 2-deoxy-D-ribose 5-phosphate. The protein is Deoxyribose-phosphate aldolase of Vibrio vulnificus (strain CMCP6).